We begin with the raw amino-acid sequence, 455 residues long: Post-transcriptional regulator MTA (455 aa).

The segment at 17–163 is disordered; that stretch reads DSVSSSEFDE…QVNCQRQDDD (147 aa). The segment covering 23–42 has biased composition (acidic residues); that stretch reads EFDESRDDETDAPTLEDEQL. A compositionally biased stretch (low complexity) spans 88–98; that stretch reads SPLSRPRSPSP. 3 short sequence motifs (nuclear localization signal) span residues 101-107, 121-130, and 143-152; these read RYGKKIK, KRPRRRPRDR, and RAAPKRATRR. Zn(2+)-binding residues include Cys-333, His-423, Cys-427, and Cys-432. The segment at 333 to 432 adopts a CHC2-type zinc-finger fold; sequence CVFDKQSELA…HHSLCRNSEC (100 aa).

It belongs to the HHV-1 ICP27 protein family. In terms of assembly, homodimer. Homodimerization is required for transactivation. Interacts with host ALYREF. Associates in a complex with RNA, and host export factors NXF1/TAP and ALYREF; these interactions allow nuclear export of viral transcripts. Interacts with protein K-bZIP/K8; this interaction promotes viral gene expression during lytic infection. Interacts with host PABPC1. Interacts with host AGO2 and TNRC6A; these interactions inhibit host P-body formation. Interacts with PRKRA and EIF2AK2/PKR; these interactions inhibit host stress granule formation. Proteolytically cleaved by host caspase-7 (CASP7), leading to its inactivation, thereby preventing expression of viral lytic genes.

It is found in the host cytoplasm. It localises to the host nucleus. In terms of biological role, post-transcriptional regulator that plays an essential role in the expression of viral lytic genes and productive viral replication. Possesses numerous activities that promote the expression of viral genes including enhancement of RNA stability, promotion of RNA splicing and stimulation of protein translation often via its ability to interact with different cellular cofactors. Stabilizes polyadenylated nuclear (PAN) RNA by cooperative binding to a 9-nt core of the MRE (MTA responsive element) together with host PABPC1. Functions as a viral splicing factor and promotes expression of intron-containing viral lytic genes. Protects viral transcripts from specific nuclear RNA decay pathways by preventing host MTREX recruitment that promotes unwinding and degradation of structured RNA substrates. Plays a role in the inhibition of host P-body formation by altering the scaffolding activity of TNRC6A at the initial stage thereby enhancing virus production. Also inhibits host stress granule formation by blocking autophosphorylation of EIF2AK2/PKR and its subsequent binding to dsRNA. The chain is Post-transcriptional regulator MTA from Human herpesvirus 8 type P (isolate GK18) (HHV-8).